A 1066-amino-acid chain; its full sequence is MTNFKFTLLARSIAFALNASTAYAAQPTNQPTNQPTNQPTNQPTNQPTNQPTNQDSNLSEQLEQINVSGSTETINVKEKKVGETQISAKKLAKQQASDSRDLVRYETGITVVETGRTGASGYAVRGVDENRVGIMVDGLRQAETLSSQGFKELFEGYGNFNNTRNNIEIENVKTATITKGADSLKSGSGALGGSVIFETKDARDYLIDKDYYVSYKRGYQTMNNQNLKTLTLAGRSKKFDILVVDTTRDGHEIENYDYKIYPNKQADLSAVGPTREKADPYQITRQSTLIKLGFQPNENHRLSVALDDSTLETKGMDLSYAFRPYSQADKEIYGERIINDQSKRKNIQFSYENFSQTPFWDHIKLSYSSQKITNKARSDEYCHQSTCNGVSNPQGLHLVEEKGVYKIVDKDNKDFNYQEDKNNPWSYGKELYNSKNEKISNDVDTEGGALDSVLINCEKLNCEKKKFPIYKEKDEEWKDKYEHEDRDITIKELNGKKYGEISLKKSDSSGFTKYESARFLFPKSFGYSTDFVNDRDLNTNTQQIKLDLDKEFHLWHAQHQLKYGGLYEKTLKSMVNHQYNTAANVQWWADYFFCKKPVNGNRIPAPDHSAYRCKLMNSDIGKDTYLIPVTTKNNVLYFGDNVQLTSWLGLDLNYRYDHVKYLPSYDKNIPVPNGLITGLFKKFKSTDYVYGNKYLVPKGYTNCTYTTDCYKQNFEENLALLLRKTDYKHHSYNLGLNLDPTNWLRVQLKYANGFRAPTSDEIYMTFKHPQFSIQPNTDLKAETSKTKEVAFTFYKNSSYITLNAFQNDYRNFIDLVEVGERPIEEGSVVRYPFHQNQNRDRARVRGIEIASRLEMGDLLEKLQRFPLGYKFTYQKGRIKDNGLHPKYKEFLELNKDEHPEYEAIARKPQPMNALQPTTSVYNIGYDAPSQKWGVDMYITNVAAKKAKDSFNSQWTSMVARKEKIYDTESTVPAKKANGKEVKDSRGLWRNNRYTVIDTIAYWKPIKNLTFTAGVYNLTNKKYLTWDSARSVRHLGTINRVETATGKGLNRLYAPGRNYRMSVQFEF.

Residues 1 to 24 (MTNFKFTLLARSIAFALNASTAYA) form the signal peptide. Repeat copies occupy residues 26–29 (QPTN), 30–33 (QPTN), 34–37 (QPTN), 38–41 (QPTN), 42–45 (QPTN), 46–49 (QPTN), and 50–53 (QPTN). Residues 26-53 (QPTNQPTNQPTNQPTNQPTNQPTNQPTN) are 7 X 4 AA tandem repeats of Q-P-T-N. Residues 26-54 (QPTNQPTNQPTNQPTNQPTNQPTNQPTNQ) are compositionally biased toward low complexity. The disordered stretch occupies residues 26 to 57 (QPTNQPTNQPTNQPTNQPTNQPTNQPTNQDSN). The short motif at 63–70 (EQINVSGS) is the TonB box element. One can recognise a TBDR plug domain in the interval 66–200 (NVSGSTETIN…LGGSVIFETK (135 aa)). Positions 208-1066 (DKDYYVSYKR…NYRMSVQFEF (859 aa)) constitute a TBDR beta-barrel domain. The TonB C-terminal box signature appears at 1049-1066 (NRLYAPGRNYRMSVQFEF).

This sequence belongs to the TonB-dependent receptor family. Hemoglobin/haptoglobin binding protein subfamily.

The protein localises to the cell outer membrane. Its function is as follows. Acts as a receptor for hemoglobin or the hemoglobin/haptoglobin complex of the human host and is required for heme uptake. The chain is Hemoglobin and hemoglobin-haptoglobin-binding protein C (hgpC) from Haemophilus influenzae.